The primary structure comprises 530 residues: Cation transporter HKT2;1 (530 aa).

The Cytoplasmic segment spans residues 1–40 (MTSIYHDFIHNKLQSFGRIGRYFVNFVVLAHRFIALHIHP). Helical transmembrane passes span 41–61 (FWIQLSYFLLISILGSVLLMF) and 102–122 (IVVITLLMLLGGEVFVSFLGL). Residues 123–186 (MLRLNHKHNP…DLKRSKRLRW (64 aa)) lie on the Cytoplasmic side of the membrane. 2 helical membrane-spanning segments follow: residues 187–207 (FLGFVVFSYFVVIHVAGFLLV) and 260–280 (GLLLLFIGQILAGNTLYPLFL). The Cytoplasmic segment spans residues 281-317 (RLLIWFLGKVTKLRELKLMIKNPEELQYDYLLPKLPT). Helical transmembrane passes span 318–338 (AFLASTVIGLMASLVTLFGAV) and 372–392 (IDCSLIAPAVLVLFIILMYLP). At 393 to 418 (PSTTFALSNGDEKTANKKAKRKLGLV) the chain is on the cytoplasmic side. A run of 2 helical transmembrane segments spans residues 419–439 (VQNLAFSQLACISVFVIVAFI) and 494–514 (SLSGWWSDEGKLLLVFVMLYG). Topologically, residues 515–530 (RLKAFTKGTGEYWRLW) are cytoplasmic.

This sequence belongs to the TrkH potassium transport family. HKT (TC 2.A.38.3) subfamily. In terms of tissue distribution, expressed in epidermis and vascular tissue of endodermis in roots, and in cells surrounding the vasculature in leaves.

It localises to the membrane. The enzyme catalyses Na(+)(in) = Na(+)(out). In terms of biological role, seems to be involved in regulation of potassium-sodium homeostasis. Seems to act as a high-affinity sodium transporter, which mediates increased sodium uptake in roots under potassium deficiency and contributes to sodium accumulation and salt toxicity. Involved in nutritional sodium uptake and distribution in potassium-starved roots to allow plant growth. May also act as a potassium transporter. Functions as a sodium-potassium cotransporter. This chain is Cation transporter HKT2;1, found in Oryza sativa subsp. indica (Rice).